The sequence spans 259 residues: 3-deoxy-manno-octulosonate cytidylyltransferase (259 aa).

It belongs to the KdsB family.

The protein localises to the cytoplasm. The catalysed reaction is 3-deoxy-alpha-D-manno-oct-2-ulosonate + CTP = CMP-3-deoxy-beta-D-manno-octulosonate + diphosphate. The protein operates within nucleotide-sugar biosynthesis; CMP-3-deoxy-D-manno-octulosonate biosynthesis; CMP-3-deoxy-D-manno-octulosonate from 3-deoxy-D-manno-octulosonate and CTP: step 1/1. It participates in bacterial outer membrane biogenesis; lipopolysaccharide biosynthesis. Activates KDO (a required 8-carbon sugar) for incorporation into bacterial lipopolysaccharide in Gram-negative bacteria. The sequence is that of 3-deoxy-manno-octulosonate cytidylyltransferase from Actinobacillus succinogenes (strain ATCC 55618 / DSM 22257 / CCUG 43843 / 130Z).